The primary structure comprises 158 residues: SsrA-binding protein (158 aa).

The protein belongs to the SmpB family.

The protein localises to the cytoplasm. Its function is as follows. Required for rescue of stalled ribosomes mediated by trans-translation. Binds to transfer-messenger RNA (tmRNA), required for stable association of tmRNA with ribosomes. tmRNA and SmpB together mimic tRNA shape, replacing the anticodon stem-loop with SmpB. tmRNA is encoded by the ssrA gene; the 2 termini fold to resemble tRNA(Ala) and it encodes a 'tag peptide', a short internal open reading frame. During trans-translation Ala-aminoacylated tmRNA acts like a tRNA, entering the A-site of stalled ribosomes, displacing the stalled mRNA. The ribosome then switches to translate the ORF on the tmRNA; the nascent peptide is terminated with the 'tag peptide' encoded by the tmRNA and targeted for degradation. The ribosome is freed to recommence translation, which seems to be the essential function of trans-translation. This chain is SsrA-binding protein, found in Roseiflexus sp. (strain RS-1).